The following is a 690-amino-acid chain: uncharacterized protein (690 aa).

This sequence to M.genitalium MG366 and M.pneumoniae MPN544.

This is an uncharacterized protein from Ureaplasma parvum serovar 3 (strain ATCC 700970).